We begin with the raw amino-acid sequence, 454 residues long: Toluate 1,2-dioxygenase subunit alpha (454 aa).

The region spanning 51-148 (IYLAHESQIP…SFDCDGSHDL (98 aa)) is the Rieske domain. The [2Fe-2S] cluster site is built by C92, H94, C112, and H115. Fe cation is bound by residues H221 and H226.

It belongs to the bacterial ring-hydroxylating dioxygenase alpha subunit family. In terms of assembly, this dioxygenase system consists of three proteins: the two subunits of the hydroxylase component (XylX and XylY), and an electron transfer component (XylZ). The cofactor is [2Fe-2S] cluster. Requires Fe cation as cofactor.

Its pathway is xenobiotic degradation; toluene degradation. This Pseudomonas putida (Arthrobacter siderocapsulatus) protein is Toluate 1,2-dioxygenase subunit alpha (xylX).